We begin with the raw amino-acid sequence, 344 residues long: MISSEEKVEFLRKLVEIYSPTGRESEAVKFIVESFESFGVDAYVDEVGNAIAIREGKGPRILLAGHVDTVPGIIPVRIEDGVLWGRGSVDAKGPLATFFFATLESNANIIFAGLVDEEGFSKGAKNLDVPRPDYIIIGEPSGVDGVTIGYKGSLTAKFVESVEKVHGSLGVDAAERLINRWLEIKSSFGEGFDALSGRIVELHAYERDFDFYGEMVINLRTPPGYNPPKGWEILDFVPAYQVDRRSPLVRAFVRGIRRNGMRPRLKKKTGTADMNILGPRFGVDAVAYGPGDSRLDHTPHERISLSEYLLAIDVLVDVIEELKGAKERAAEESGEREAGKALSG.

H66 lines the Zn(2+) pocket. Residue D68 is part of the active site. D90 contributes to the Zn(2+) binding site. The active-site Proton acceptor is E117. Zn(2+) is bound by residues E118, E139, and H297.

This sequence belongs to the peptidase M20A family. LysK subfamily. The cofactor is Zn(2+). Co(2+) serves as cofactor.

The protein resides in the cytoplasm. The catalysed reaction is [amino-group carrier protein]-C-terminal-gamma-(L-lysyl)-L-glutamate + H2O = [amino-group carrier protein]-C-terminal-L-glutamate + L-lysine. It carries out the reaction [amino-group carrier protein]-C-terminal-gamma-(L-ornithyl)-L-glutamate + H2O = [amino-group carrier protein]-C-terminal-L-glutamate + L-ornithine. The protein operates within amino-acid biosynthesis; L-lysine biosynthesis via AAA pathway; L-lysine from L-alpha-aminoadipate (Thermus route): step 5/5. It participates in amino-acid biosynthesis; L-arginine biosynthesis. Catalyzes the release of L-lysine from [LysW]-gamma-L-lysine and the release of L-ornithine from [LysW]-L-ornithine. The chain is Putative [LysW]-lysine/[LysW]-ornithine hydrolase from Thermococcus kodakarensis (strain ATCC BAA-918 / JCM 12380 / KOD1) (Pyrococcus kodakaraensis (strain KOD1)).